The following is a 384-amino-acid chain: Ribonucleoside-diphosphate reductase small chain (384 aa).

Fe cation is bound by residues Asp-130, Glu-161, and His-164. Residue Tyr-168 is part of the active site. Fe cation contacts are provided by Glu-224, Glu-258, and His-261.

Belongs to the ribonucleoside diphosphate reductase small chain family. In terms of assembly, heterodimer of a large and a small subunit. The cofactor is Fe cation.

The catalysed reaction is a 2'-deoxyribonucleoside 5'-diphosphate + [thioredoxin]-disulfide + H2O = a ribonucleoside 5'-diphosphate + [thioredoxin]-dithiol. Its function is as follows. Provides the precursors necessary for DNA synthesis. Catalyzes the biosynthesis of deoxyribonucleotides from the corresponding ribonucleotides. The polypeptide is Ribonucleoside-diphosphate reductase small chain (Spisula solidissima (Atlantic surf-clam)).